The primary structure comprises 412 residues: Glutamyl-tRNA reductase (412 aa).

Substrate-binding positions include 52–55 (TCNR), Ser108, 113–115 (EYE), and Gln119. The active-site Nucleophile is the Cys53. 189-194 (GAGEIG) contributes to the NADP(+) binding site.

It belongs to the glutamyl-tRNA reductase family. As to quaternary structure, homodimer.

The catalysed reaction is (S)-4-amino-5-oxopentanoate + tRNA(Glu) + NADP(+) = L-glutamyl-tRNA(Glu) + NADPH + H(+). It participates in porphyrin-containing compound metabolism; protoporphyrin-IX biosynthesis; 5-aminolevulinate from L-glutamyl-tRNA(Glu): step 1/2. Functionally, catalyzes the NADPH-dependent reduction of glutamyl-tRNA(Glu) to glutamate 1-semialdehyde (GSA). This Sulfurisphaera tokodaii (strain DSM 16993 / JCM 10545 / NBRC 100140 / 7) (Sulfolobus tokodaii) protein is Glutamyl-tRNA reductase.